The sequence spans 196 residues: GTP cyclohydrolase-2 (196 aa).

49-53 (RVHSE) serves as a coordination point for GTP. Residues Cys-54, Cys-65, and Cys-67 each contribute to the Zn(2+) site. Residues Gln-70, 92-94 (EGR), and Thr-114 contribute to the GTP site. Catalysis depends on Asp-126, which acts as the Proton acceptor. The Nucleophile role is filled by Arg-128. Positions 149 and 154 each coordinate GTP.

The protein belongs to the GTP cyclohydrolase II family. As to quaternary structure, homodimer. Requires Zn(2+) as cofactor.

It carries out the reaction GTP + 4 H2O = 2,5-diamino-6-hydroxy-4-(5-phosphoribosylamino)-pyrimidine + formate + 2 phosphate + 3 H(+). It participates in cofactor biosynthesis; riboflavin biosynthesis; 5-amino-6-(D-ribitylamino)uracil from GTP: step 1/4. Catalyzes the conversion of GTP to 2,5-diamino-6-ribosylamino-4(3H)-pyrimidinone 5'-phosphate (DARP), formate and pyrophosphate. This chain is GTP cyclohydrolase-2, found in Shigella dysenteriae serotype 1 (strain Sd197).